The primary structure comprises 418 residues: Serine hydroxymethyltransferase (418 aa).

Residues Leu121 and 125–127 each bind (6S)-5,6,7,8-tetrahydrofolate; that span reads GHL. The residue at position 230 (Lys230) is an N6-(pyridoxal phosphate)lysine. 355 to 357 lines the (6S)-5,6,7,8-tetrahydrofolate pocket; the sequence is SPF.

This sequence belongs to the SHMT family. Homodimer. It depends on pyridoxal 5'-phosphate as a cofactor.

The protein localises to the cytoplasm. It catalyses the reaction (6R)-5,10-methylene-5,6,7,8-tetrahydrofolate + glycine + H2O = (6S)-5,6,7,8-tetrahydrofolate + L-serine. Its pathway is one-carbon metabolism; tetrahydrofolate interconversion. The protein operates within amino-acid biosynthesis; glycine biosynthesis; glycine from L-serine: step 1/1. In terms of biological role, catalyzes the reversible interconversion of serine and glycine with tetrahydrofolate (THF) serving as the one-carbon carrier. This reaction serves as the major source of one-carbon groups required for the biosynthesis of purines, thymidylate, methionine, and other important biomolecules. Also exhibits THF-independent aldolase activity toward beta-hydroxyamino acids, producing glycine and aldehydes, via a retro-aldol mechanism. This is Serine hydroxymethyltransferase from Alcanivorax borkumensis (strain ATCC 700651 / DSM 11573 / NCIMB 13689 / SK2).